The following is a 179-amino-acid chain: DELTA-actitoxin-Afr1a (179 aa).

The segment at 1-29 (SADVAGAVIDGAGLGFDVLKTVLEALGNV) is N-terminal alpha-helix that contributes to the pore. Arg31 lines the an N-(acyl)-sphingosylphosphocholine pocket. The N-acetyl-D-glucosamine 6-sulfate site is built by Tyr51 and Arg53. 13 residues coordinate an N-(acyl)-sphingosylphosphocholine: Arg53, Ser54, Arg79, Gly85, Tyr108, Tyr113, Ser114, Trp116, Tyr133, Tyr137, Tyr138, Arg144, and Gly168. A trp-rich region, which is important for the binding to lipid membrane region spans residues 105 to 120 (SVPYDYNWYSNWWNVR). Tyr138 provides a ligand contact to N-acetyl-D-glucosamine 6-sulfate. Positions 144-146 (RGD) match the Cell attachment site, crucial for protein stability motif.

It belongs to the actinoporin family. Sea anemone subfamily. Octamer or nonamer in membranes. Monomer in the soluble state.

Its subcellular location is the secreted. The protein localises to the nematocyst. It is found in the target cell membrane. In terms of biological role, pore-forming toxin (PFT) that consists of a crown-shaped octamer or nonamer that forms cation-selective hydrophilic pores of about 1.5 nm (inside) and 13 nm (outside). It causes cardiac stimulation and cytolysis (EC(50)=1.6 nM on erythrocytes). Interestingly, the Phe-16 is crucial for hemolysis. Pore formation is a multi-step process that involves specific recognition of membrane sphingomyelin (but neither cholesterol nor phosphatidylcholine) using aromatic rich region and adjacent phosphocholine (POC) binding site, firm binding to the membrane (mainly driven by hydrophobic interactions) accompanied by the transfer of the N-terminal region to the lipid-water interface and finally pore formation after oligomerization of monomers. It is probable that a dimeric form is an assembly intermediate before the complete oligomerization. The formation of stable pores occurs only in vesicles composed of DOPC/SM (there is no oligomerization when the PFT is treated with vesicles of DOPC or SM alone). The transmembrane pore displays 8 lateral perforations, one at each subunit-subunit interface, partially occupied by the acyl-chain region of a bridging lipid. Each pore contains 24 lipid molecules, firmly bound to each subunit, that is, 3 lipids (L1, L2, L3, L4 and/or L5) are associated to each subunit. Lipid L1 bridges 2 subunits, whereas lipids L2 and L3 bind to sites at single subunit. In Actinia fragacea (Strawberry anemone), this protein is DELTA-actitoxin-Afr1a.